We begin with the raw amino-acid sequence, 375 residues long: Erythronate-4-phosphate dehydrogenase (375 aa).

Serine 45 and threonine 66 together coordinate substrate. NAD(+) is bound by residues aspartate 146 and threonine 175. The active site involves arginine 208. NAD(+) is bound at residue aspartate 232. Residue glutamate 237 is part of the active site. Histidine 254 (proton donor) is an active-site residue. Glycine 257 provides a ligand contact to NAD(+). Tyrosine 258 provides a ligand contact to substrate.

This sequence belongs to the D-isomer specific 2-hydroxyacid dehydrogenase family. PdxB subfamily. In terms of assembly, homodimer.

It is found in the cytoplasm. The catalysed reaction is 4-phospho-D-erythronate + NAD(+) = (R)-3-hydroxy-2-oxo-4-phosphooxybutanoate + NADH + H(+). It participates in cofactor biosynthesis; pyridoxine 5'-phosphate biosynthesis; pyridoxine 5'-phosphate from D-erythrose 4-phosphate: step 2/5. Its function is as follows. Catalyzes the oxidation of erythronate-4-phosphate to 3-hydroxy-2-oxo-4-phosphonooxybutanoate. The chain is Erythronate-4-phosphate dehydrogenase from Yersinia pseudotuberculosis serotype O:1b (strain IP 31758).